A 189-amino-acid polypeptide reads, in one-letter code: Peptidyl-tRNA hydrolase (189 aa).

Catalysis depends on H19, which acts as the Proton acceptor. TRNA-binding residues include Y64, N66, and N112.

Belongs to the PTH family. As to quaternary structure, monomer.

Its subcellular location is the cytoplasm. It catalyses the reaction an N-acyl-L-alpha-aminoacyl-tRNA + H2O = an N-acyl-L-amino acid + a tRNA + H(+). In terms of biological role, hydrolyzes ribosome-free peptidyl-tRNAs (with 1 or more amino acids incorporated), which drop off the ribosome during protein synthesis, or as a result of ribosome stalling. Catalyzes the release of premature peptidyl moieties from peptidyl-tRNA molecules trapped in stalled 50S ribosomal subunits, and thus maintains levels of free tRNAs and 50S ribosomes. The chain is Peptidyl-tRNA hydrolase from Gluconobacter oxydans (strain 621H) (Gluconobacter suboxydans).